Reading from the N-terminus, the 306-residue chain is Elongation factor Ts (306 aa).

The interval 80-83 is involved in Mg(2+) ion dislocation from EF-Tu; sequence TDFV.

Belongs to the EF-Ts family.

The protein resides in the cytoplasm. Functionally, associates with the EF-Tu.GDP complex and induces the exchange of GDP to GTP. It remains bound to the aminoacyl-tRNA.EF-Tu.GTP complex up to the GTP hydrolysis stage on the ribosome. In Clostridium acetobutylicum (strain ATCC 824 / DSM 792 / JCM 1419 / IAM 19013 / LMG 5710 / NBRC 13948 / NRRL B-527 / VKM B-1787 / 2291 / W), this protein is Elongation factor Ts.